Reading from the N-terminus, the 69-residue chain is Large ribosomal subunit protein bL31 (69 aa).

Zn(2+) contacts are provided by Cys17, Cys19, Cys37, and Cys40.

Belongs to the bacterial ribosomal protein bL31 family. Type A subfamily. In terms of assembly, part of the 50S ribosomal subunit. Zn(2+) is required as a cofactor.

Binds the 23S rRNA. This Caldanaerobacter subterraneus subsp. tengcongensis (strain DSM 15242 / JCM 11007 / NBRC 100824 / MB4) (Thermoanaerobacter tengcongensis) protein is Large ribosomal subunit protein bL31.